The chain runs to 71 residues: Beta-defensin 131A (71 aa).

Positions 1–22 (MRVLFFVFGVLSLMFTVPPARS) are cleaved as a signal peptide. Intrachain disulfides connect Cys-29–Cys-57, Cys-37–Cys-51, and Cys-41–Cys-58.

The protein belongs to the beta-defensin family.

Its subcellular location is the secreted. In terms of biological role, has antibacterial activity. Upon stimulation with lipoteichoic acid, promotes cytokines and chemokines production and secretion. In Pan troglodytes (Chimpanzee), this protein is Beta-defensin 131A.